We begin with the raw amino-acid sequence, 226 residues long: Clarin-3 (226 aa).

The chain crosses the membrane as a helical span at residues Leu-8–Leu-28. N-linked (GlcNAc...) asparagine glycosylation is found at Asn-46 and Asn-83. The next 3 membrane-spanning stretches (helical) occupy residues Val-92 to Phe-112, Gly-128 to Val-148, and Phe-181 to Tyr-201.

This sequence belongs to the clarin family.

It localises to the membrane. In Rattus norvegicus (Rat), this protein is Clarin-3 (Clrn3).